A 177-amino-acid chain; its full sequence is Early nodulin-like protein 15 (177 aa).

Positions 1-24 (MASSSLLVTIFLCISVFFFSSVNA) are cleaved as a signal peptide. Residues 25-129 (NEVTVGGKSG…GQKLRLVVIT (105 aa)) form the Phytocyanin domain. Residues cysteine 83 and cysteine 117 are joined by a disulfide bond. Asparagine 84 carries N-linked (GlcNAc...) asparagine glycosylation. Serine 153 carries the GPI-anchor amidated serine lipid modification. The propeptide at 154–177 (GAAKLAGGFSVVFGLVLGLWAFFF) is removed in mature form.

The protein belongs to the early nodulin-like (ENODL) family. Mostly expressed in seedlings, siliques and flowers, and, to a lower extent, in roots, stems and seeds, but barely in leaves.

It localises to the cell membrane. Functionally, may act as a carbohydrate transporter. Required, together with ENODL11, ENODL12, ENODL13, ENODL14 and ENODL15, for male-female communication and pollen tube reception and burst at the synergid cell surface of the female gametophyte. In Arabidopsis thaliana (Mouse-ear cress), this protein is Early nodulin-like protein 15.